Here is a 2678-residue protein sequence, read N- to C-terminus: Mediator of RNA polymerase II transcription subunit 13 (2678 aa).

Disordered stretches follow at residues 1–52 (MMGT…GYNS), 140–285 (SKKP…QPIS), 495–524 (NSNNIINNNNNSNINNNINNNNNQQQQQQQ), 553–615 (QQQQ…NNNI), 852–993 (SPSS…QQQQ), 1070–1253 (TSHY…KPFL), 1278–1394 (LPHN…QDES), 1462–1502 (SPFS…NNHH), 1806–1838 (FSGSSGLNNSNDRNSMIPMDNSDDTSDLMSMDD), 2075–2105 (QNQNQNQNSNSNESQQQQQQQSNNKQKQTQT), 2225–2307 (SSSS…QEQK), and 2656–2678 (KLTPNSKQSPSPINSPHLNSNNT). Low complexity-rich tracts occupy residues 15–48 (SGSNAGGNVNNNNNGPNINNPNNPNNTNSLPTTS), 144–162 (INNSSNNSNITSSTSTDSS), and 169–186 (NSPSETTPPNTTNNNSNN). Polar residues predominate over residues 187–206 (VTKDSPPNATNKMSTSPKSL). Residues 207–276 (SPTISNNNNN…SPPTVASVTS (70 aa)) show a composition bias toward low complexity. Composition is skewed to low complexity over residues 553–573 (QQQQTINNNSNNISSNNDNNN) and 587–615 (SSSSSSTPSQVTMQTTPTQEFSNNNNNNI). Over residues 855–872 (SPLTQHPSSPHSPFNNVN) the composition is skewed to polar residues. The segment covering 901–916 (KKRHGKSQKKGRSSKR) has biased composition (basic residues). The segment covering 922–950 (SNNNNNNNTTTTSTITATTTTTTPTAATT) has biased composition (low complexity). 2 stretches are compositionally biased toward polar residues: residues 966–979 (NIQETSQPQSLTTV) and 1079–1090 (PTQNGSQKNNQR). The span at 1109–1150 (TTTTTTTTTTTPTPNPTTTTTQPQTQPQQQSQQQQQPQQTNP) shows a compositional bias: low complexity. The segment covering 1151–1195 (ILPTNSNLITNQKPQQYQPPLQDPFQSIDSQQPKSIQSPTLTNQP) has biased composition (polar residues). The segment covering 1201-1211 (PTLTNQPLQQY) has biased composition (low complexity). Residues 1281-1306 (NTEQSPSNDDLSNPNHLHHGTPTSAI) show a composition bias toward polar residues. The segment covering 1312 to 1321 (SSSSSGNNMI) has biased composition (low complexity). The segment covering 1322-1343 (GSGGIVGSGGGNTNVSGSGGGM) has biased composition (gly residues). The segment covering 1359-1371 (PHHHHHHHHHHHP) has biased composition (basic residues). The segment covering 1475 to 1497 (TTTNNNNNHNNNNNNNHPNNHHQ) has biased composition (low complexity). The span at 1806-1819 (FSGSSGLNNSNDRN) shows a compositional bias: polar residues. Residues 2658 to 2678 (TPNSKQSPSPINSPHLNSNNT) show a composition bias toward polar residues.

This sequence belongs to the Mediator complex subunit 13 family. Component of the Mediator complex.

Its subcellular location is the nucleus. Component of the Mediator complex, a coactivator involved in the regulated transcription of nearly all RNA polymerase II-dependent genes. Mediator functions as a bridge to convey information from gene-specific regulatory proteins to the basal RNA polymerase II transcription machinery. Mediator is recruited to promoters by direct interactions with regulatory proteins and serves as a scaffold for the assembly of a functional preinitiation complex with RNA polymerase II and the general transcription factors. Required for the starvation-induced activation of the ACA (adenylyl cyclase) expression pathway at the growth/differentiation transition. This is Mediator of RNA polymerase II transcription subunit 13 (amiB) from Dictyostelium discoideum (Social amoeba).